Consider the following 246-residue polypeptide: Transcription factor A, mitochondrial (246 aa).

A mitochondrion-targeting transit peptide spans methionine 1 to phenylalanine 42. Positions proline 50 to lysine 118 form a DNA-binding region, HMG box 1. Residues serine 55, serine 56, and serine 61 each carry the phosphoserine; by PKA modification. The residue at position 122 (threonine 122) is a Phosphothreonine. Residues proline 155–glutamate 219 constitute a DNA-binding region (HMG box 2). At serine 160 the chain carries Phosphoserine; by PKA. Serine 193 and serine 195 each carry phosphoserine.

In terms of assembly, monomer; binds DNA as a monomer. Homodimer. Component of the mitochondrial transcription initiation complex, composed at least of TFB2M, TFAM and POLRMT. In this complex TFAM recruits POLRMT to the promoter whereas TFB2M induces structural changes in POLRMT to enable promoter opening and trapping of the DNA non-template strand. Upon metabolic stress, forms a complex composed of FOXO3, SIRT3, TFAM and POLRMT. Interacts with TFB1M and TFB2M. Interacts with CLPX; this enhances DNA-binding. Post-translationally, phosphorylation by PKA within the HMG box 1 impairs DNA binding and promotes degradation by the AAA+ Lon protease.

The protein resides in the mitochondrion. It is found in the mitochondrion matrix. It localises to the mitochondrion nucleoid. In terms of biological role, binds to the mitochondrial light strand promoter and functions in mitochondrial transcription regulation. Component of the mitochondrial transcription initiation complex, composed at least of TFB2M, TFAM and POLRMT that is required for basal transcription of mitochondrial DNA. In this complex, TFAM recruits POLRMT to a specific promoter whereas TFB2M induces structural changes in POLRMT to enable promoter opening and trapping of the DNA non-template strand. Required for accurate and efficient promoter recognition by the mitochondrial RNA polymerase. Promotes transcription initiation from the HSP1 and the light strand promoter by binding immediately upstream of transcriptional start sites. Is able to unwind DNA. Bends the mitochondrial light strand promoter DNA into a U-turn shape via its HMG boxes. Required for maintenance of normal levels of mitochondrial DNA. May play a role in organizing and compacting mitochondrial DNA. The protein is Transcription factor A, mitochondrial of Homo sapiens (Human).